The sequence spans 273 residues: UPF0380 protein YubP (273 aa).

Belongs to the UPF0380 family.

The chain is UPF0380 protein YubP (yubP) from Escherichia coli (strain K12).